The primary structure comprises 101 residues: Small ribosomal subunit protein uS14 (101 aa).

Belongs to the universal ribosomal protein uS14 family. Part of the 30S ribosomal subunit. Contacts proteins S3 and S10.

Functionally, binds 16S rRNA, required for the assembly of 30S particles and may also be responsible for determining the conformation of the 16S rRNA at the A site. This Hydrogenovibrio crunogenus (strain DSM 25203 / XCL-2) (Thiomicrospira crunogena) protein is Small ribosomal subunit protein uS14.